The following is a 901-amino-acid chain: Protein translocase subunit SecA (901 aa).

ATP-binding positions include Gln-87, 105–109, and Asp-512; that span reads GEGKT. Residues 859–901 form a disordered region; sequence HQDDDSAAAAALAAQTGERKVGRNDPCPCGSGKKYKQCHGRLQ. Zn(2+) is bound by residues Cys-885, Cys-887, Cys-896, and His-897. The span at 891–901 shows a compositional bias: basic residues; sequence KKYKQCHGRLQ.

It belongs to the SecA family. In terms of assembly, monomer and homodimer. Part of the essential Sec protein translocation apparatus which comprises SecA, SecYEG and auxiliary proteins SecDF-YajC and YidC. Zn(2+) is required as a cofactor.

The protein resides in the cell inner membrane. It localises to the cytoplasm. The catalysed reaction is ATP + H2O + cellular proteinSide 1 = ADP + phosphate + cellular proteinSide 2.. Part of the Sec protein translocase complex. Interacts with the SecYEG preprotein conducting channel. Has a central role in coupling the hydrolysis of ATP to the transfer of proteins into and across the cell membrane, serving both as a receptor for the preprotein-SecB complex and as an ATP-driven molecular motor driving the stepwise translocation of polypeptide chains across the membrane. This chain is Protein translocase subunit SecA, found in Escherichia coli O9:H4 (strain HS).